Consider the following 123-residue polypeptide: Fluoride-specific ion channel FluC 1 (123 aa).

4 helical membrane-spanning segments follow: residues 1–21 (MVDLLLIGLGGSIGAILRYTL), 34–54 (PLATFLINIIGSFGLGLLYGF), 59–79 (VIWLLLGTGFFGGFTTFSTYI), and 99–119 (LTSIFTGVVFFAAGMWLANFF). Residues Gly-70 and Thr-73 each contribute to the Na(+) site.

It belongs to the fluoride channel Fluc/FEX (TC 1.A.43) family.

It is found in the cell membrane. It carries out the reaction fluoride(in) = fluoride(out). Its activity is regulated as follows. Na(+) is not transported, but it plays an essential structural role and its presence is essential for fluoride channel function. Fluoride-specific ion channel. Important for reducing fluoride concentration in the cell, thus reducing its toxicity. This chain is Fluoride-specific ion channel FluC 1, found in Carboxydothermus hydrogenoformans (strain ATCC BAA-161 / DSM 6008 / Z-2901).